A 546-amino-acid chain; its full sequence is Chaperonin GroEL 1 (546 aa).

Residues 30-33, Lys51, 87-91, Gly415, 479-481, and Asp495 each bind ATP; these read TLGP, DGTTT, and NAA.

The protein belongs to the chaperonin (HSP60) family. In terms of assembly, forms a cylinder of 14 subunits composed of two heptameric rings stacked back-to-back. Interacts with the co-chaperonin GroES.

Its subcellular location is the cytoplasm. The catalysed reaction is ATP + H2O + a folded polypeptide = ADP + phosphate + an unfolded polypeptide.. Its function is as follows. Together with its co-chaperonin GroES, plays an essential role in assisting protein folding. The GroEL-GroES system forms a nano-cage that allows encapsulation of the non-native substrate proteins and provides a physical environment optimized to promote and accelerate protein folding. This chain is Chaperonin GroEL 1, found in Paraburkholderia xenovorans (strain LB400).